The following is a 397-amino-acid chain: Mannitol-1-phosphate 5-dehydrogenase (397 aa).

9-20 (AVHFGAGNIGRG) serves as a coordination point for NAD(+). Residue K220 is part of the active site.

This sequence belongs to the mannitol dehydrogenase family. As to quaternary structure, monomer.

The catalysed reaction is D-mannitol 1-phosphate + NAD(+) = beta-D-fructose 6-phosphate + NADH + H(+). Its function is as follows. Catalyzes the NAD(H)-dependent interconversion of D-fructose 6-phosphate and D-mannitol 1-phosphate in the mannitol metabolic pathway. This is Mannitol-1-phosphate 5-dehydrogenase from Podospora anserina (strain S / ATCC MYA-4624 / DSM 980 / FGSC 10383) (Pleurage anserina).